The primary structure comprises 407 residues: Probable succinyl-diaminopimelate desuccinylase (407 aa).

Position 72 (H72) interacts with Zn(2+). D74 is an active-site residue. A Zn(2+)-binding site is contributed by D105. E139 serves as the catalytic Proton acceptor. The Zn(2+) site is built by E140, E165, and H378.

Belongs to the peptidase M20A family. It depends on Zn(2+) as a cofactor. Co(2+) is required as a cofactor.

It carries out the reaction N-succinyl-(2S,6S)-2,6-diaminopimelate + H2O = (2S,6S)-2,6-diaminopimelate + succinate. It participates in amino-acid biosynthesis; L-lysine biosynthesis via DAP pathway; LL-2,6-diaminopimelate from (S)-tetrahydrodipicolinate (succinylase route): step 3/3. The protein is Probable succinyl-diaminopimelate desuccinylase (dapE) of Staphylococcus aureus (strain N315).